The primary structure comprises 275 residues: Shikimate dehydrogenase (NADP(+)) (275 aa).

Residues Ser15 to Ser17 and Thr62 each bind shikimate. Catalysis depends on Lys66, which acts as the Proton acceptor. NADP(+) is bound at residue Glu78. Asn87 and Asp102 together coordinate shikimate. NADP(+)-binding positions include Gly127–Ala131, Asn151–Lys156, and Met215. Tyr217 provides a ligand contact to shikimate. Gly239 lines the NADP(+) pocket.

This sequence belongs to the shikimate dehydrogenase family. Homodimer.

The enzyme catalyses shikimate + NADP(+) = 3-dehydroshikimate + NADPH + H(+). It participates in metabolic intermediate biosynthesis; chorismate biosynthesis; chorismate from D-erythrose 4-phosphate and phosphoenolpyruvate: step 4/7. Functionally, involved in the biosynthesis of the chorismate, which leads to the biosynthesis of aromatic amino acids. Catalyzes the reversible NADPH linked reduction of 3-dehydroshikimate (DHSA) to yield shikimate (SA). In Nitrosospira multiformis (strain ATCC 25196 / NCIMB 11849 / C 71), this protein is Shikimate dehydrogenase (NADP(+)).